A 321-amino-acid polypeptide reads, in one-letter code: MTSKLDQLREITTVVADTGDIEAVARLKPVDCTTNPSIVLKALGTPMFADAIKEAVAWGKKQGGNPDAVSSAVADRLAISVGAALVKLVPGRVSTEVDADLSFDTEASLAKARSIIAAYKDRGIDQDRILIKLASTWEGIRAAEVLQKEGIDCNLTLLFSKAQAIACADAKVFLISPFVGRILDWYKKSTGKDYTAEEDPGVISVREIYNYYKANDIKTIVMGASFRSAGEIEALAGCDRLTISPNLLDELAKDEGKLERKLSPEGRKPDPKVSVDEKTFRWMMNEDAMATEKLAEGIRAFAKDLGTLRTMVQKELQLAAA.

Lysine 132 serves as the catalytic Schiff-base intermediate with substrate.

Belongs to the transaldolase family. Type 1 subfamily. In terms of assembly, homodimer.

It is found in the cytoplasm. The enzyme catalyses D-sedoheptulose 7-phosphate + D-glyceraldehyde 3-phosphate = D-erythrose 4-phosphate + beta-D-fructose 6-phosphate. It participates in carbohydrate degradation; pentose phosphate pathway; D-glyceraldehyde 3-phosphate and beta-D-fructose 6-phosphate from D-ribose 5-phosphate and D-xylulose 5-phosphate (non-oxidative stage): step 2/3. In terms of biological role, transaldolase is important for the balance of metabolites in the pentose-phosphate pathway. This chain is Transaldolase, found in Rhizobium leguminosarum bv. trifolii (strain WSM2304).